The chain runs to 177 residues: Large ribosomal subunit protein uL6 (177 aa).

This sequence belongs to the universal ribosomal protein uL6 family. Part of the 50S ribosomal subunit.

Functionally, this protein binds to the 23S rRNA, and is important in its secondary structure. It is located near the subunit interface in the base of the L7/L12 stalk, and near the tRNA binding site of the peptidyltransferase center. The protein is Large ribosomal subunit protein uL6 of Ectopseudomonas mendocina (strain ymp) (Pseudomonas mendocina).